Here is a 486-residue protein sequence, read N- to C-terminus: Cobyric acid synthase (486 aa).

Residues 248-435 (VLNVVVPVLP…LHGLFESPAA (188 aa)) enclose the GATase cobBQ-type domain. Residue Cys329 is the Nucleophile of the active site. The active site involves His427.

Belongs to the CobB/CobQ family. CobQ subfamily.

The protein operates within cofactor biosynthesis; adenosylcobalamin biosynthesis. Functionally, catalyzes amidations at positions B, D, E, and G on adenosylcobyrinic A,C-diamide. NH(2) groups are provided by glutamine, and one molecule of ATP is hydrogenolyzed for each amidation. The sequence is that of Cobyric acid synthase from Pseudomonas syringae pv. syringae (strain B728a).